Consider the following 271-residue polypeptide: Thiosulfate sulfurtransferase (271 aa).

2 Rhodanese domains span residues 21–129 (GAPE…ALDR) and 159–270 (GAAD…TPVE). Catalysis depends on Cys230, which acts as the Cysteine persulfide intermediate.

It is found in the cytoplasm. It catalyses the reaction thiosulfate + hydrogen cyanide = thiocyanate + sulfite + 2 H(+). Functionally, catalyzes the sulfur transfer reaction from thiosulfate to cyanide, thus converting cyanide to the less toxic thiocyanate. Contributes to P.aeruginosa survival under cyanogenic conditions, and thus provides the bacterium with a defense mechanism against endogenous cyanide toxicity. Is the main cytoplasmic rhodanese in P.aeruginosa, accounting for 90% of total rhodanese activity. In Pseudomonas aeruginosa (strain ATCC 15692 / DSM 22644 / CIP 104116 / JCM 14847 / LMG 12228 / 1C / PRS 101 / PAO1), this protein is Thiosulfate sulfurtransferase.